The sequence spans 479 residues: ATP synthase subunit beta (479 aa).

Residue 153 to 160 (GGAGVGKT) coordinates ATP.

This sequence belongs to the ATPase alpha/beta chains family. In terms of assembly, F-type ATPases have 2 components, CF(1) - the catalytic core - and CF(0) - the membrane proton channel. CF(1) has five subunits: alpha(3), beta(3), gamma(1), delta(1), epsilon(1). CF(0) has three main subunits: a(1), b(2) and c(9-12). The alpha and beta chains form an alternating ring which encloses part of the gamma chain. CF(1) is attached to CF(0) by a central stalk formed by the gamma and epsilon chains, while a peripheral stalk is formed by the delta and b chains.

The protein localises to the cell membrane. It carries out the reaction ATP + H2O + 4 H(+)(in) = ADP + phosphate + 5 H(+)(out). Functionally, produces ATP from ADP in the presence of a proton gradient across the membrane. The catalytic sites are hosted primarily by the beta subunits. This is ATP synthase subunit beta from Lactobacillus delbrueckii subsp. bulgaricus (strain ATCC 11842 / DSM 20081 / BCRC 10696 / JCM 1002 / NBRC 13953 / NCIMB 11778 / NCTC 12712 / WDCM 00102 / Lb 14).